We begin with the raw amino-acid sequence, 304 residues long: Protoheme IX farnesyltransferase 2 (304 aa).

A run of 9 helical transmembrane segments spans residues 28-48, 50-70, 98-118, 122-142, 150-170, 176-196, 223-243, 245-265, and 282-302; these read VVAL…VVDF, WLQA…AAAF, ISVA…LYAL, LTAW…TMYL, IVIA…AVTG, AWLL…AIAI, ILLY…VGMV, SVYL…AWKL, and IYHL…GLFF.

It belongs to the UbiA prenyltransferase family. Protoheme IX farnesyltransferase subfamily.

Its subcellular location is the cell inner membrane. It carries out the reaction heme b + (2E,6E)-farnesyl diphosphate + H2O = Fe(II)-heme o + diphosphate. It functions in the pathway porphyrin-containing compound metabolism; heme O biosynthesis; heme O from protoheme: step 1/1. Converts heme B (protoheme IX) to heme O by substitution of the vinyl group on carbon 2 of heme B porphyrin ring with a hydroxyethyl farnesyl side group. This chain is Protoheme IX farnesyltransferase 2, found in Vibrio campbellii (strain ATCC BAA-1116).